Consider the following 102-residue polypeptide: Small ribosomal subunit protein uS10 (102 aa).

Belongs to the universal ribosomal protein uS10 family. Part of the 30S ribosomal subunit.

Involved in the binding of tRNA to the ribosomes. The protein is Small ribosomal subunit protein uS10 of Beijerinckia indica subsp. indica (strain ATCC 9039 / DSM 1715 / NCIMB 8712).